Reading from the N-terminus, the 221-residue chain is Fructokinase (221 aa).

It belongs to the carbohydrate kinase PfkB family.

It carries out the reaction D-fructose + ATP = D-fructose 6-phosphate + ADP + H(+). This chain is Fructokinase (scrK), found in Salmonella thompson.